Consider the following 895-residue polypeptide: Pyruvate dehydrogenase E1 component (895 aa).

The interval 1 to 20 (MSAVPEQILGASSANDADPQ) is disordered.

Homodimer. Part of the PDH complex, consisting of multiple copies of pyruvate dehydrogenase (E1), dihydrolipoamide acetyltransferase (E2) and lipoamide dehydrogenase (E3). It depends on thiamine diphosphate as a cofactor.

The enzyme catalyses N(6)-[(R)-lipoyl]-L-lysyl-[protein] + pyruvate + H(+) = N(6)-[(R)-S(8)-acetyldihydrolipoyl]-L-lysyl-[protein] + CO2. Functionally, component of the pyruvate dehydrogenase (PDH) complex, that catalyzes the overall conversion of pyruvate to acetyl-CoA and CO(2). The chain is Pyruvate dehydrogenase E1 component (pdhA) from Cupriavidus necator (strain ATCC 17699 / DSM 428 / KCTC 22496 / NCIMB 10442 / H16 / Stanier 337) (Ralstonia eutropha).